The sequence spans 513 residues: Exoglucanase 1 (513 aa).

Residues 1 to 17 (MYRKLAVISAFLATARA) form the signal peptide. Glutamine 18 carries the post-translational modification Pyrrolidone carboxylic acid. The interval 18–453 (QSACTLQSET…GSTGNPSGGN (436 aa)) is catalytic. 10 disulfides stabilise this stretch: cysteine 21-cysteine 89, cysteine 36-cysteine 42, cysteine 67-cysteine 88, cysteine 78-cysteine 84, cysteine 155-cysteine 414, cysteine 189-cysteine 227, cysteine 193-cysteine 226, cysteine 247-cysteine 273, cysteine 255-cysteine 260, and cysteine 278-cysteine 348. Residue asparagine 62 is glycosylated (N-linked (GlcNAc) asparagine). The active-site Nucleophile is glutamate 229. Glutamate 234 (proton donor/acceptor) is an active-site residue. N-linked (GlcNAc) asparagine glycans are attached at residues asparagine 287 and asparagine 401. Polar residues predominate over residues 401–437 (NETSSTPGAVRGSCSTSSGVPAQVESQSPNAKVTFSN). Positions 401–480 (NETSSTPGAV…TGSSPGPTQS (80 aa)) are disordered. Residues 449–459 (PSGGNPPGGNR) are compositionally biased toward gly residues. Residues 454–477 (PPGGNRGTTTTRRPATTTGSSPGP) form a linker region. The segment covering 460 to 478 (GTTTTRRPATTTGSSPGPT) has biased composition (low complexity). Threonine 461 is a glycosylation site (O-linked (Man) threonine). Threonine 462, threonine 463, and threonine 464 each carry an O-linked (Man...) threonine glycan. Threonine 469 is a glycosylation site (O-linked (Man) threonine). O-linked (Man...) threonine glycans are attached at residues threonine 470 and threonine 471. Serine 473 and serine 474 each carry an O-linked (Man) serine glycan. Residues 477–513 (PTQSHYGQCGGIGYSGPTVCASGTTCQVLNPYYSQCL) form the CBM1 domain. The O-linked (Man) threonine glycan is linked to threonine 478. Serine 480 and serine 491 each carry an O-linked (Man) serine glycan. Intrachain disulfides connect cysteine 485/cysteine 502 and cysteine 496/cysteine 512.

Belongs to the glycosyl hydrolase 7 (cellulase C) family. Post-translationally, N-glycosylated. The catalytic core domain comprises three N-linked glycans which each consist of a single N-acetylglucosamine residue. O-glycosylated. Within the linker domain, all 8 threonines are variably glycosylated with between at least one, and up to three, mannose residues per site. All serines in this domain are at least partially glycosylated with a single mannose residue. O-glycosylation of the cellulase linker provides protection from proteolysis. Linker glycans also contribute to binding affinity of cellobiohydrolases to cellulose.

Its subcellular location is the secreted. It carries out the reaction Hydrolysis of (1-&gt;4)-beta-D-glucosidic linkages in cellulose and cellotetraose, releasing cellobiose from the non-reducing ends of the chains.. Its function is as follows. Exocellobiohydrolases (CBH) that catalyzes the hydrolysis of 1,4-beta-D-glucosidic bonds in cellulose to release the disaccharide cellobiose. The degradation of cellulose involves an interplay between different cellulolytic enzymes. Hydrolysis starts with endoglucanases (EGs), which cut internal beta-1,4-glucosidic bonds in cellulose to reduce the polymerization degree of the substrate and create new chain ends for exocellobiohydrolases (CBHs). The CBHs release the disaccharide cellobiose from the non-reducing end of the cellulose polymer chain. Finally, beta-1,4-glucosidases hydrolyze the cellobiose and other short cello-oligosaccharides into glucose units. The protein is Exoglucanase 1 (cbh1) of Hypocrea jecorina (Trichoderma reesei).